We begin with the raw amino-acid sequence, 475 residues long: Glutamyl-tRNA(Gln) amidotransferase subunit A (475 aa).

Residues Lys69 and Ser144 each act as charge relay system in the active site. Ser168 (acyl-ester intermediate) is an active-site residue.

It belongs to the amidase family. GatA subfamily. As to quaternary structure, heterotrimer of A, B and C subunits.

The enzyme catalyses L-glutamyl-tRNA(Gln) + L-glutamine + ATP + H2O = L-glutaminyl-tRNA(Gln) + L-glutamate + ADP + phosphate + H(+). Its function is as follows. Allows the formation of correctly charged Gln-tRNA(Gln) through the transamidation of misacylated Glu-tRNA(Gln) in organisms which lack glutaminyl-tRNA synthetase. The reaction takes place in the presence of glutamine and ATP through an activated gamma-phospho-Glu-tRNA(Gln). This Methanosarcina barkeri (strain Fusaro / DSM 804) protein is Glutamyl-tRNA(Gln) amidotransferase subunit A.